A 433-amino-acid polypeptide reads, in one-letter code: Xylose isomerase (433 aa).

Residues His-97 and Asp-100 contribute to the active site. 7 residues coordinate Mg(2+): Glu-228, Glu-264, His-267, Asp-292, Asp-303, Asp-305, and Asp-334.

It belongs to the xylose isomerase family. In terms of assembly, homotetramer. It depends on Mg(2+) as a cofactor.

It localises to the cytoplasm. The catalysed reaction is alpha-D-xylose = alpha-D-xylulofuranose. The polypeptide is Xylose isomerase (Fervidobacterium gondwanense).